An 806-amino-acid chain; its full sequence is Lon protease 1 (806 aa).

In terms of domain architecture, Lon N-terminal spans 31-235 (VPLIAVPSHP…KVLELIYEEL (205 aa)). 389 to 396 (GPPGVGKT) contributes to the ATP binding site. Residues 626-806 (AMYSGMVMGL…NMREVIKLLF (181 aa)) form the Lon proteolytic domain. Active-site residues include S714 and K757.

Belongs to the peptidase S16 family. Homohexamer. Organized in a ring with a central cavity.

The protein localises to the cytoplasm. The enzyme catalyses Hydrolysis of proteins in presence of ATP.. ATP-dependent serine protease that mediates the selective degradation of mutant and abnormal proteins as well as certain short-lived regulatory proteins. Required for cellular homeostasis and for survival from DNA damage and developmental changes induced by stress. Degrades polypeptides processively to yield small peptide fragments that are 5 to 10 amino acids long. Binds to DNA in a double-stranded, site-specific manner. In Borreliella burgdorferi (strain ATCC 35210 / DSM 4680 / CIP 102532 / B31) (Borrelia burgdorferi), this protein is Lon protease 1.